Reading from the N-terminus, the 173-residue chain is Coordinator of PRMT5 and differentiation stimulator (173 aa).

At Met1 the chain carries N-acetylmethionine. A disordered region spans residues 1-70 (MDPQAATGRG…EGPSSEEEGF (70 aa)). Residues Ser64 and Ser65 each carry the phosphoserine modification.

In terms of assembly, interacts with PRMT5. Interacts with histone H4; specifically interacts with the N-terminus of histone H4 but not with histone H3. Interacts with CBFB. Found in a complex with PRMT5, RUNX1 and CBFB.

The protein resides in the nucleus. Functionally, histone-binding protein required for histone H4 methyltransferase activity of PRMT5. Specifically required for histone H4 'Arg-3' methylation mediated by PRMT5, but not histone H3 'Arg-8' methylation, suggesting that it modulates the substrate specificity of PRMT5. Specifically interacts with the N-terminus of histone H4 but not with histone H3, suggesting that it acts by promoting the association between histone H4 and PRMT5. Involved in CCNE1 promoter repression. Plays a role in muscle cell differentiation by modulating the recruitment of PRMT5 to the promoter of genes involved in the coordination between cell cycle exit and muscle differentiation. The protein is Coordinator of PRMT5 and differentiation stimulator (Coprs) of Mus musculus (Mouse).